We begin with the raw amino-acid sequence, 33 residues long: NAD-reducing hydrogenase HoxS subunit gamma (33 aa).

Residues 1–33 (SIEIEIDGVTVTTEESRTLVDVAAEAGVYIPTL) form the 2Fe-2S ferredoxin-type domain.

It belongs to the complex I 75 kDa subunit family. Tetramer of an alpha and a gamma subunits (flavin-containing dimer), and a delta and a nickel-containing beta subunits (hydrogenase dimer). The cofactor is [4Fe-4S] cluster.

Its subcellular location is the cytoplasm. It catalyses the reaction H2 + NAD(+) = NADH + H(+). Its function is as follows. Subunits alpha and gamma of HoxS constitute an NADH--oxidoreductase. The chain is NAD-reducing hydrogenase HoxS subunit gamma (hoxU) from Rhodococcus opacus (Nocardia opaca).